The primary structure comprises 156 residues: Ribosomal RNA large subunit methyltransferase H (156 aa).

S-adenosyl-L-methionine-binding positions include Leu-73, Gly-104, and 123–128 (LSALTL).

This sequence belongs to the RNA methyltransferase RlmH family. In terms of assembly, homodimer.

The protein resides in the cytoplasm. The enzyme catalyses pseudouridine(1915) in 23S rRNA + S-adenosyl-L-methionine = N(3)-methylpseudouridine(1915) in 23S rRNA + S-adenosyl-L-homocysteine + H(+). Functionally, specifically methylates the pseudouridine at position 1915 (m3Psi1915) in 23S rRNA. The protein is Ribosomal RNA large subunit methyltransferase H of Erwinia tasmaniensis (strain DSM 17950 / CFBP 7177 / CIP 109463 / NCPPB 4357 / Et1/99).